Reading from the N-terminus, the 715-residue chain is Palmitoyltransferase ZDHHC5 (715 aa).

At 1 to 13 (MPAESGKRFKPSK) the chain is on the cytoplasmic side. A helical transmembrane segment spans residues 14–34 (YVPVSAAAIFLVGATTLFFAF). The Extracellular portion of the chain corresponds to 35–52 (TCPGLSLNVSPAVPIYNA). Residues 53–73 (IMFLFVLANFSMATFMDPGIF) form a helical membrane-spanning segment. The Cytoplasmic portion of the chain corresponds to 74–148 (PRAEEDEDKE…NCIGRRNYRY (75 aa)). Y91 carries the post-translational modification Phosphotyrosine. One can recognise a DHHC domain in the interval 104–154 (KWCATCRFYRPPRCSHCSVCDNCVEEFDHHCPWVNNCIGRRNYRYFFLFLL). Residue C134 is the S-palmitoyl cysteine intermediate of the active site. Residues 149–169 (FFLFLLSLTAHIMGVFGFGLL) traverse the membrane as a helical segment. The Extracellular segment spans residues 170–191 (YVLYHIEELSGVRTAVTMAVMC). A helical membrane pass occupies residues 192–212 (VAGLFFIPVAGLTGFHVVLVA). At 213–715 (RGRTTNEQVT…VGGTTYEISV (503 aa)) the chain is on the cytoplasmic side. Residue S247 is modified to Phosphoserine. The disordered stretch occupies residues 289 to 715 (GELRRTKSKG…VGGTTYEISV (427 aa)). At T294 the chain carries Phosphothreonine. A phosphoserine mark is found at S296 and S299. T303 is modified (phosphothreonine). S345 carries the post-translational modification Phosphoserine. Phosphothreonine occurs at positions 348 and 350. The segment covering 359–373 (SSSSTSAAMPHSSSA) has biased composition (low complexity). Residues S380, S398, S406, and S409 each carry the phosphoserine modification. T411 carries the phosphothreonine modification. Phosphoserine is present on residues S415, S425, S429, and S432. Positions 422–432 (SSGSRSSSLKS) are enriched in low complexity. T436 bears the Phosphothreonine mark. A compositionally biased stretch (polar residues) spans 442 to 478 (QLQSIRSEGTTSTSYKSLANQTRNGSLSYDSLLTPSD). S529 and S554 each carry phosphoserine. A compositionally biased stretch (low complexity) spans 581–597 (PRTSSSSDDSKRSPLSK). An Omega-N-methylarginine modification is found at R617. S621 carries the post-translational modification Phosphoserine. T659 is modified (phosphothreonine). Residues 666-677 (LKTTYSKSNGQP) are compositionally biased toward polar residues. 2 positions are modified to phosphoserine: S684 and S694. R697 bears the Omega-N-methylarginine mark.

It belongs to the DHHC palmitoyltransferase family. ERF2/ZDHHC9 subfamily. In terms of processing, phosphorylation regulates association with endocytic proteins and its subcellular localization. Phosphorylation by LYN during fatty acid uptake leads to inactivation of the activity. Autopalmitoylated. Palmitoylation of the C-terminal tail regulates stimulation-dependent plasma membrane motility. In terms of tissue distribution, highly enriched in brain, detectable in liver and heart, and undetectable in most other tissues.

It localises to the cell membrane. The enzyme catalyses L-cysteinyl-[protein] + hexadecanoyl-CoA = S-hexadecanoyl-L-cysteinyl-[protein] + CoA. Functionally, palmitoyltransferase that catalyzes the addition of palmitate onto various protein substrates such as CTNND2, CD36, GSDMD, NLRP3, NOD1, NOD2, STAT3 and S1PR1 thus plays a role in various biological processes including cell adhesion, inflammation, fatty acid uptake, bacterial sensing or cardiac functions. Plays an important role in the regulation of synapse efficacy by mediating palmitoylation of delta-catenin/CTNND2, thereby increasing synaptic delivery and surface stabilization of alpha-amino-3-hydroxy-5-methyl-4-isoxazole propionic acid receptors (AMPARs). Under basal conditions, remains at the synaptic membrane through FYN-mediated phosphorylation that prevents association with endocytic proteins. Neuronal activity enhances the internalization and trafficking of DHHC5 from spines to dendritic shafts where it palmitoylates delta-catenin/CTNND2. Regulates cell adhesion at the plasma membrane by palmitoylating GOLGA7B and DSG2. Plays a role in innate immune response by mediating the palmitoylation of NOD1 and NOD2 and their proper recruitment to the bacterial entry site and phagosomes. Also participates in fatty acid uptake by palmitoylating CD36 and thereby targeting it to the plasma membrane. Upon binding of fatty acids to CD36, gets phosphorylated by LYN leading to inactivation and subsequent CD36 caveolar endocytosis. Controls oligodendrocyte development by catalyzing STAT3 palmitoylation. Acts as a regulator of inflammatory response by mediating palmitoylation of NLRP3 and GSDMD. Palmitoylates NLRP3 to promote inflammasome assembly and activation. Activates pyroptosis by catalyzing palmitoylation of gasdermin-D (GSDMD), thereby promoting membrane translocation and pore formation of GSDMD. This Mus musculus (Mouse) protein is Palmitoyltransferase ZDHHC5 (Zdhhc5).